The chain runs to 122 residues: Large ribosomal subunit protein uL14c (122 aa).

The protein belongs to the universal ribosomal protein uL14 family. Part of the 50S ribosomal subunit.

The protein localises to the plastid. The protein resides in the chloroplast. Binds to 23S rRNA. This chain is Large ribosomal subunit protein uL14c, found in Platanus occidentalis (Sycamore).